Consider the following 287-residue polypeptide: uncharacterized protein (287 aa).

Residues 1–23 (MTVSDSPAQRQTPPQTPGGTAPR) form a disordered region. Low complexity predominate over residues 7–23 (PAQRQTPPQTPGGTAPR). Mg(2+)-binding residues include aspartate 31, aspartate 33, and aspartate 204.

Belongs to the HAD-like hydrolase superfamily. SerB family.

This is an uncharacterized protein from Mycobacterium tuberculosis (strain CDC 1551 / Oshkosh).